A 102-amino-acid chain; its full sequence is A-type ATP synthase subunit F (102 aa).

This sequence belongs to the V-ATPase F subunit family. In terms of assembly, has multiple subunits with at least A(3), B(3), C, D, E, F, H, I and proteolipid K(x).

It is found in the cell membrane. Component of the A-type ATP synthase that produces ATP from ADP in the presence of a proton gradient across the membrane. This Thermococcus onnurineus (strain NA1) protein is A-type ATP synthase subunit F.